The following is an 839-amino-acid chain: Periplasmic nitrate reductase (839 aa).

A signal peptide (tat-type signal) is located at residues 1–34 (MTLTRRDFIKANAAAAAATAAAVNLPLVPSMAQA). One can recognise a 4Fe-4S Mo/W bis-MGD-type domain in the interval 46-102 (IKWDKAACRFCGTGCSVLVGTKGGRVVATQGDPDAPVNRGLNCIKGYFLSKIMYGED). Residues Cys-53, Cys-56, Cys-60, and Cys-88 each contribute to the [4Fe-4S] cluster site. Residues Lys-90, Gln-157, Asn-182, Cys-186, 219–226 (WGSNMAEM), 250–254 (STYEH), 269–271 (QTD), Met-379, Gln-383, Asn-489, 515–516 (SD), Lys-538, Asp-565, and 729–738 (TGRVLEHWHT) contribute to the Mo-bis(molybdopterin guanine dinucleotide) site. Phe-805 is a binding site for substrate. The Mo-bis(molybdopterin guanine dinucleotide) site is built by Asn-813 and Lys-830.

This sequence belongs to the prokaryotic molybdopterin-containing oxidoreductase family. NasA/NapA/NarB subfamily. Component of the periplasmic nitrate reductase NapAB complex composed of NapA and NapB. Requires [4Fe-4S] cluster as cofactor. Mo-bis(molybdopterin guanine dinucleotide) serves as cofactor. Predicted to be exported by the Tat system. The position of the signal peptide cleavage has not been experimentally proven.

Its subcellular location is the periplasm. The catalysed reaction is 2 Fe(II)-[cytochrome] + nitrate + 2 H(+) = 2 Fe(III)-[cytochrome] + nitrite + H2O. In terms of biological role, catalytic subunit of the periplasmic nitrate reductase complex NapAB. Receives electrons from NapB and catalyzes the reduction of nitrate to nitrite. In Laribacter hongkongensis (strain HLHK9), this protein is Periplasmic nitrate reductase.